The chain runs to 201 residues: Pyridoxine/pyridoxamine 5'-phosphate oxidase (201 aa).

Residues 45–50, 65–66, Arg71, Lys72, and Gln94 each bind FMN; these read RMVLLK and YT. A substrate-binding site is contributed by Lys50. Substrate contacts are provided by Tyr112, Arg116, and Ser120. FMN contacts are provided by residues 129 to 130 and Trp174; that span reads QS. 180 to 182 contributes to the substrate binding site; that stretch reads RLH. An FMN-binding site is contributed by Arg184.

This sequence belongs to the pyridoxamine 5'-phosphate oxidase family. In terms of assembly, homodimer. FMN serves as cofactor.

It carries out the reaction pyridoxamine 5'-phosphate + O2 + H2O = pyridoxal 5'-phosphate + H2O2 + NH4(+). It catalyses the reaction pyridoxine 5'-phosphate + O2 = pyridoxal 5'-phosphate + H2O2. The protein operates within cofactor metabolism; pyridoxal 5'-phosphate salvage; pyridoxal 5'-phosphate from pyridoxamine 5'-phosphate: step 1/1. It functions in the pathway cofactor metabolism; pyridoxal 5'-phosphate salvage; pyridoxal 5'-phosphate from pyridoxine 5'-phosphate: step 1/1. Functionally, catalyzes the oxidation of either pyridoxine 5'-phosphate (PNP) or pyridoxamine 5'-phosphate (PMP) into pyridoxal 5'-phosphate (PLP). This is Pyridoxine/pyridoxamine 5'-phosphate oxidase from Rhodospirillum rubrum (strain ATCC 11170 / ATH 1.1.1 / DSM 467 / LMG 4362 / NCIMB 8255 / S1).